A 311-amino-acid chain; its full sequence is Fructose-1,6-bisphosphatase class 1 (311 aa).

E90, D110, L112, and D113 together coordinate Mg(2+). Substrate contacts are provided by residues 113 to 116 (DGSS), Y221, and K251. E257 contacts Mg(2+).

This sequence belongs to the FBPase class 1 family. As to quaternary structure, homotetramer. Mg(2+) serves as cofactor.

The protein localises to the cytoplasm. It catalyses the reaction beta-D-fructose 1,6-bisphosphate + H2O = beta-D-fructose 6-phosphate + phosphate. It participates in carbohydrate biosynthesis; gluconeogenesis. The protein is Fructose-1,6-bisphosphatase class 1 of Methanospirillum hungatei JF-1 (strain ATCC 27890 / DSM 864 / NBRC 100397 / JF-1).